A 397-amino-acid polypeptide reads, in one-letter code: MEGMEEANRTAVESCHRVLALLSNPHGQLVPSKELVAATGEAVAKFGSLTAKLSNSNGDGLLQGHARVRKVKKPLHIFDSNLFLESSAVAAAAAPAKTPSPSPILGLQLFPRYHQFEGSSSKDPVRIPTQFPKRLLLEKPTAGMEGSTSQSPPIVQMVQPVSVAPPAGTPTPALPPAHLHFIQQQQSYQRFQLMQQMKIQSEMMKRSNLGDQGGSLSGGGGGGRKGVNLKFDSSNCTASSSRSFLSSLSMEGSLASLDGSRTSRPFQLLSGSQTASTPELGLVQRRRCAGREDGTGRCATGSRCHCSKKRKLRIRRSIKVPAISNKVADIPADEFSWRKYGQKPIKGSPHPRGYYKCSSVRGCPARKHVERCVDDPSMLIVTYEGDHNHNRVLAQPA.

The WRKY DNA-binding region spans 326–392 (KVADIPADEF…YEGDHNHNRV (67 aa)).

It belongs to the WRKY group II-d family. In terms of assembly, interacts with RS2. More abundant in apices and young leaf primordia than in fully expanded leaf tissues.

Its subcellular location is the nucleus. Its function is as follows. Transcription factor. Interacts specifically with the W box (5'-(T)TGAC[CT]-3'), a frequently occurring elicitor-responsive cis-acting element. The chain is Protein WRKY1 from Zea mays (Maize).